The primary structure comprises 326 residues: Tetraacyldisaccharide 4'-kinase (326 aa).

Residue 52–59 coordinates ATP; the sequence is TLGGAGKT.

The protein belongs to the LpxK family.

It carries out the reaction a lipid A disaccharide + ATP = a lipid IVA + ADP + H(+). Its pathway is glycolipid biosynthesis; lipid IV(A) biosynthesis; lipid IV(A) from (3R)-3-hydroxytetradecanoyl-[acyl-carrier-protein] and UDP-N-acetyl-alpha-D-glucosamine: step 6/6. Functionally, transfers the gamma-phosphate of ATP to the 4'-position of a tetraacyldisaccharide 1-phosphate intermediate (termed DS-1-P) to form tetraacyldisaccharide 1,4'-bis-phosphate (lipid IVA). In Methylobacterium radiotolerans (strain ATCC 27329 / DSM 1819 / JCM 2831 / NBRC 15690 / NCIMB 10815 / 0-1), this protein is Tetraacyldisaccharide 4'-kinase.